A 930-amino-acid polypeptide reads, in one-letter code: Dual serine/threonine and tyrosine protein kinase (930 aa).

Over residues 1-14 the composition is skewed to low complexity; sequence MEGDGVPWGSEPVS. The disordered stretch occupies residues 1–22; sequence MEGDGVPWGSEPVSGPGPGGGG. 2 coiled-coil regions span residues 190–216 and 396–432; these read EEDLEVQENNEDAAHVLAELEVTMHHA and RKKENELYESLMNIANRKQEEMKDMIVETLNTMKEEL. Residues 653–907 form the Protein kinase domain; that stretch reads PKLGQELGRG…PLLGIVQPML (255 aa). Residues 659-667 and Lys-682 contribute to the ATP site; that span reads LGRGQYGVV. The active-site Proton acceptor is the Asp-778.

The protein belongs to the protein kinase superfamily. Ser/Thr protein kinase family.

Its subcellular location is the cytoplasm. The protein localises to the cell membrane. The protein resides in the apical cell membrane. It is found in the basolateral cell membrane. It localises to the cell junction. It carries out the reaction L-seryl-[protein] + ATP = O-phospho-L-seryl-[protein] + ADP + H(+). The catalysed reaction is L-threonyl-[protein] + ATP = O-phospho-L-threonyl-[protein] + ADP + H(+). The enzyme catalyses L-tyrosyl-[protein] + ATP = O-phospho-L-tyrosyl-[protein] + ADP + H(+). Acts as a positive regulator of ERK phosphorylation downstream of fibroblast growth factor-receptor activation. Involved in the regulation of both caspase-dependent apoptosis and caspase-independent cell death. In the skin, it plays a predominant role in suppressing caspase-dependent apoptosis in response to UV stress in a range of dermal cell types. The protein is Dual serine/threonine and tyrosine protein kinase (DSTYK) of Pan troglodytes (Chimpanzee).